Reading from the N-terminus, the 503-residue chain is Catalase (503 aa).

Positions 1–21 are cleaved as a signal peptide; it reads MHMSKSFLIISMGFVAVSVQA. Catalysis depends on residues histidine 72 and asparagine 145. Tyrosine 353 provides a ligand contact to heme.

Belongs to the catalase family. Requires heme as cofactor.

Its subcellular location is the periplasm. It carries out the reaction 2 H2O2 = O2 + 2 H2O. Decomposes hydrogen peroxide into water and oxygen; serves to protect cells from the toxic effects of hydrogen peroxide. The chain is Catalase from Vibrio cholerae serotype O1 (strain ATCC 39315 / El Tor Inaba N16961).